The following is a 668-amino-acid chain: Beta-galactosidase (668 aa).

The signal sequence occupies residues 1–24 (MARPAAVRVLWALLLPLLLGSARG). Positions 25–29 (LRNAS) are excised as a propeptide. Positions 84, 130, and 188 each coordinate substrate. Glu-189 functions as the Proton donor in the catalytic mechanism. Cys-196 and Cys-231 form a disulfide bridge. Asn-248 carries N-linked (GlcNAc...) asparagine glycosylation. Residue Glu-269 is the Nucleophile of the active site. Tyr-334 provides a ligand contact to substrate. N-linked (GlcNAc...) asparagine glycosylation is found at Asn-465, Asn-499, Asn-546, and Asn-556. The cysteines at positions 627 and 635 are disulfide-linked.

The protein belongs to the glycosyl hydrolase 35 family. As to quaternary structure, homodimer. May form higher multimers.

The protein localises to the lysosome. The enzyme catalyses Hydrolysis of terminal non-reducing beta-D-galactose residues in beta-D-galactosides.. Cleaves beta-linked terminal galactosyl residues from gangliosides, glycoproteins, and glycosaminoglycans. The chain is Beta-galactosidase (GLB1) from Canis lupus familiaris (Dog).